The chain runs to 180 residues: ATP synthase subunit b, chloroplastic (180 aa).

Residues 28-48 traverse the membrane as a helical segment; that stretch reads VTTLINIGVVLCLLIIFGKGF.

Belongs to the ATPase B chain family. In terms of assembly, F-type ATPases have 2 components, F(1) - the catalytic core - and F(0) - the membrane proton channel. F(1) has five subunits: alpha(3), beta(3), gamma(1), delta(1), epsilon(1). F(0) has four main subunits: a(1), b(1), b'(1) and c(10-14). The alpha and beta chains form an alternating ring which encloses part of the gamma chain. F(1) is attached to F(0) by a central stalk formed by the gamma and epsilon chains, while a peripheral stalk is formed by the delta, b and b' chains.

It is found in the plastid. The protein resides in the chloroplast thylakoid membrane. F(1)F(0) ATP synthase produces ATP from ADP in the presence of a proton or sodium gradient. F-type ATPases consist of two structural domains, F(1) containing the extramembraneous catalytic core and F(0) containing the membrane proton channel, linked together by a central stalk and a peripheral stalk. During catalysis, ATP synthesis in the catalytic domain of F(1) is coupled via a rotary mechanism of the central stalk subunits to proton translocation. Functionally, component of the F(0) channel, it forms part of the peripheral stalk, linking F(1) to F(0). In Cuscuta obtusiflora (Peruvian dodder), this protein is ATP synthase subunit b, chloroplastic.